We begin with the raw amino-acid sequence, 329 residues long: 4-hydroxythreonine-4-phosphate dehydrogenase (329 aa).

Positions 136 and 137 each coordinate substrate. Residues His166, His211, and His266 each contribute to the a divalent metal cation site. Substrate-binding residues include Lys274, Asn283, and Arg292.

Belongs to the PdxA family. In terms of assembly, homodimer. Zn(2+) is required as a cofactor. Requires Mg(2+) as cofactor. Co(2+) serves as cofactor.

The protein resides in the cytoplasm. It catalyses the reaction 4-(phosphooxy)-L-threonine + NAD(+) = 3-amino-2-oxopropyl phosphate + CO2 + NADH. Its pathway is cofactor biosynthesis; pyridoxine 5'-phosphate biosynthesis; pyridoxine 5'-phosphate from D-erythrose 4-phosphate: step 4/5. Catalyzes the NAD(P)-dependent oxidation of 4-(phosphooxy)-L-threonine (HTP) into 2-amino-3-oxo-4-(phosphooxy)butyric acid which spontaneously decarboxylates to form 3-amino-2-oxopropyl phosphate (AHAP). The protein is 4-hydroxythreonine-4-phosphate dehydrogenase of Salmonella typhimurium (strain LT2 / SGSC1412 / ATCC 700720).